Reading from the N-terminus, the 376-residue chain is Polar flagellin A (376 aa).

Coiled coils occupy residues Ser103–Glu128 and Phe310–Thr338.

It belongs to the bacterial flagellin family. As to quaternary structure, heteromer of multiple flagellin subunits including FlaA, FlaB/D, FlaC, FlaE and FlaF.

It localises to the secreted. The protein resides in the bacterial flagellum. Functionally, flagellin is the subunit protein which polymerizes to form the filaments of bacterial flagella. FlaA is not essential for polar flagellar synthesis and swimming motility. Homomer of FlaA is able to form a functional filament. The protein is Polar flagellin A (flaA) of Vibrio parahaemolyticus serotype O3:K6 (strain RIMD 2210633).